Consider the following 225-residue polypeptide: 2-C-methyl-D-erythritol 4-phosphate cytidylyltransferase (225 aa).

This sequence belongs to the IspD/TarI cytidylyltransferase family. IspD subfamily.

It carries out the reaction 2-C-methyl-D-erythritol 4-phosphate + CTP + H(+) = 4-CDP-2-C-methyl-D-erythritol + diphosphate. Its pathway is isoprenoid biosynthesis; isopentenyl diphosphate biosynthesis via DXP pathway; isopentenyl diphosphate from 1-deoxy-D-xylulose 5-phosphate: step 2/6. Functionally, catalyzes the formation of 4-diphosphocytidyl-2-C-methyl-D-erythritol from CTP and 2-C-methyl-D-erythritol 4-phosphate (MEP). The polypeptide is 2-C-methyl-D-erythritol 4-phosphate cytidylyltransferase (Clostridium perfringens (strain ATCC 13124 / DSM 756 / JCM 1290 / NCIMB 6125 / NCTC 8237 / Type A)).